The sequence spans 338 residues: Lipoyl synthase (338 aa).

Positions 1–24 (MTTVQEAVPNLIPTQDATPRPAPK) are disordered. Residues C84, C89, C95, C110, C114, C117, and S324 each coordinate [4Fe-4S] cluster. One can recognise a Radical SAM core domain in the interval 96–313 (FSGGTATFMI…AEEGYKMGFK (218 aa)).

The protein belongs to the radical SAM superfamily. Lipoyl synthase family. Requires [4Fe-4S] cluster as cofactor.

Its subcellular location is the cytoplasm. The enzyme catalyses [[Fe-S] cluster scaffold protein carrying a second [4Fe-4S](2+) cluster] + N(6)-octanoyl-L-lysyl-[protein] + 2 oxidized [2Fe-2S]-[ferredoxin] + 2 S-adenosyl-L-methionine + 4 H(+) = [[Fe-S] cluster scaffold protein] + N(6)-[(R)-dihydrolipoyl]-L-lysyl-[protein] + 4 Fe(3+) + 2 hydrogen sulfide + 2 5'-deoxyadenosine + 2 L-methionine + 2 reduced [2Fe-2S]-[ferredoxin]. It functions in the pathway protein modification; protein lipoylation via endogenous pathway; protein N(6)-(lipoyl)lysine from octanoyl-[acyl-carrier-protein]: step 2/2. Its function is as follows. Catalyzes the radical-mediated insertion of two sulfur atoms into the C-6 and C-8 positions of the octanoyl moiety bound to the lipoyl domains of lipoate-dependent enzymes, thereby converting the octanoylated domains into lipoylated derivatives. This chain is Lipoyl synthase, found in Pseudomonas putida (strain ATCC 700007 / DSM 6899 / JCM 31910 / BCRC 17059 / LMG 24140 / F1).